The sequence spans 70 residues: Toxin Boma6d (70 aa).

One can recognise an LCN-type CS-alpha/beta domain in the interval 2–68 (RDAYIAQNYN…VPIKVEGKCH (67 aa)). Cystine bridges form between cysteine 12-cysteine 67, cysteine 16-cysteine 40, cysteine 22-cysteine 50, and cysteine 26-cysteine 52.

It belongs to the long (4 C-C) scorpion toxin superfamily. Sodium channel inhibitor family. Alpha subfamily. In terms of tissue distribution, expressed by the venom gland.

It localises to the secreted. Alpha toxins bind voltage-independently at site-3 of sodium channels (Nav) and inhibit the inactivation of the activated channels, thereby blocking neuronal transmission. The polypeptide is Toxin Boma6d (Buthus occitanus mardochei (Moroccan scorpion)).